The sequence spans 553 residues: MSDIALTVSILALVAVVGLFIGNVKFRGVGLGIGGVLFGGIIVGHFVSQAGMTLSSDMLHVIQEFGLILFVYTIGIQVGPGFFASLRVSGLRLNLFAVLIVIIGGLVTAILHKLFDIPLPVVLGIFSGAVTNTPALGAGQQILRDLGTPMEMVDQMGMSYAMAYPFGICGILFTMWMLRVIFRVNVETEAQQHESTRTNGGALIRTINIRVENPNLHNLAIKDVPILNGDKVICSRLKREETLKVPSPETVIQLGDLLHLVGQPADLHNAQLVIGQEVDTSLSTKGTDLRVARVVVTNENVLGKRIRDLHFKERYDVVISRLNRAGVELVASSDISLQFGDILNLVGRPSAIDAVANVLGNAQQKLQQVQMLPVFIGIGLGVLLGSIPVFVPGFPAALKLGLAGGPLIMALILGRIGSIGKLYWFMPPSANLALRELGIVLFLSVVGLKSGGDFIHTLVDGEGLSWIGYGALITAVPLITVGILARMLAKMNYLTMCGMLAGSMTDPPALAFANNLHPTSGAAALSYATVYPLVMFLRIITPQLLAVLFWSIG.

The next 5 membrane-spanning stretches (helical) occupy residues 4-24, 28-48, 65-85, 95-115, and 158-178; these read IALTVSILALVAVVGLFIGNV, GVGLGIGGVLFGGIIVGHFVS, FGLILFVYTIGIQVGPGFFAS, LFAVLIVIIGGLVTAILHKLF, and MSYAMAYPFGICGILFTMWML. 2 consecutive RCK C-terminal domains span residues 191–276 and 279–361; these read QQHE…VIGQ and DTSL…VLGN. The next 6 helical transmembrane spans lie at 371 to 391, 393 to 413, 439 to 459, 464 to 484, 493 to 513, and 533 to 553; these read MLPVFIGIGLGVLLGSIPVFV, GFPAALKLGLAGGPLIMALIL, IVLFLSVVGLKSGGDFIHTLV, LSWIGYGALITAVPLITVGIL, YLTMCGMLAGSMTDPPALAFA, and LVMFLRIITPQLLAVLFWSIG.

The protein belongs to the AAE transporter (TC 2.A.81) family. YidE subfamily.

The protein localises to the cell membrane. This is Putative transport protein YidE from Escherichia coli O6:K15:H31 (strain 536 / UPEC).